A 429-amino-acid polypeptide reads, in one-letter code: Zygotic gap protein knirps (429 aa).

Positions 2–78 form a DNA-binding region, nuclear receptor; it reads NQTCKVCGEP…VGMSKGGSRY (77 aa). NR C4-type zinc fingers lie at residues 5–25 and 42–66; these read CKVC…CEGC and CKNE…LRKC. A compositionally biased stretch (low complexity) spans 112–126; sequence SVGGAPSASSPVGSP. 4 disordered regions span residues 112 to 148, 223 to 250, 338 to 357, and 375 to 397; these read SVGG…QQQQ, QSVD…SSAR, TSRS…QEVE, and SSSS…AEVK. Polar residues-rich tracts occupy residues 225-237 and 338-349; these read VDSV…FSPA and TSRSSVHSFNDS. Residues 375 to 393 show a composition bias toward low complexity; sequence SSSSSSHSAAHSPNTTTAH.

It belongs to the nuclear hormone receptor family. NR0 subfamily.

The protein resides in the nucleus. In terms of biological role, transcriptional repressor. Binds to multiple sites in the eve stripe 3 enhancer element. Plays an essential role in the segmentation process both by refining the expression patterns of gap genes and by establishing pair-rules stripes of gene expression. This is Zygotic gap protein knirps (kni) from Drosophila melanogaster (Fruit fly).